A 383-amino-acid polypeptide reads, in one-letter code: Succinyl-diaminopimelate desuccinylase (383 aa).

H73 lines the Zn(2+) pocket. Residue D75 is part of the active site. Position 107 (D107) interacts with Zn(2+). Residue E141 is the Proton acceptor of the active site. E142, E170, and H356 together coordinate Zn(2+).

The protein belongs to the peptidase M20A family. DapE subfamily. In terms of assembly, homodimer. Zn(2+) is required as a cofactor. It depends on Co(2+) as a cofactor.

The catalysed reaction is N-succinyl-(2S,6S)-2,6-diaminopimelate + H2O = (2S,6S)-2,6-diaminopimelate + succinate. Its pathway is amino-acid biosynthesis; L-lysine biosynthesis via DAP pathway; LL-2,6-diaminopimelate from (S)-tetrahydrodipicolinate (succinylase route): step 3/3. Catalyzes the hydrolysis of N-succinyl-L,L-diaminopimelic acid (SDAP), forming succinate and LL-2,6-diaminopimelate (DAP), an intermediate involved in the bacterial biosynthesis of lysine and meso-diaminopimelic acid, an essential component of bacterial cell walls. The chain is Succinyl-diaminopimelate desuccinylase from Pseudomonas syringae pv. tomato (strain ATCC BAA-871 / DC3000).